A 196-amino-acid chain; its full sequence is Proteasome subunit beta 2 (196 aa).

A propeptide spans 1–6 (removed in mature form; by autocatalysis); the sequence is MEELPS. Threonine 7 serves as the catalytic Nucleophile.

It belongs to the peptidase T1B family. The 20S proteasome core is composed of 14 alpha and 14 beta subunits that assemble into four stacked heptameric rings, resulting in a barrel-shaped structure. The two inner rings, each composed of seven catalytic beta subunits, are sandwiched by two outer rings, each composed of seven alpha subunits. The catalytic chamber with the active sites is on the inside of the barrel. Has a gated structure, the ends of the cylinder being occluded by the N-termini of the alpha-subunits. Is capped at one or both ends by the proteasome regulatory ATPase, PAN.

It localises to the cytoplasm. The catalysed reaction is Cleavage of peptide bonds with very broad specificity.. With respect to regulation, the formation of the proteasomal ATPase PAN-20S proteasome complex, via the docking of the C-termini of PAN into the intersubunit pockets in the alpha-rings, triggers opening of the gate for substrate entry. Interconversion between the open-gate and close-gate conformations leads to a dynamic regulation of the 20S proteasome proteolysis activity. Component of the proteasome core, a large protease complex with broad specificity involved in protein degradation. The chain is Proteasome subunit beta 2 from Metallosphaera sedula (strain ATCC 51363 / DSM 5348 / JCM 9185 / NBRC 15509 / TH2).